The sequence spans 150 residues: Cell division protein SepF (150 aa).

The protein belongs to the SepF family. In terms of assembly, homodimer. Interacts with FtsZ.

The protein localises to the cytoplasm. Cell division protein that is part of the divisome complex and is recruited early to the Z-ring. Probably stimulates Z-ring formation, perhaps through the cross-linking of FtsZ protofilaments. Its function overlaps with FtsA. This chain is Cell division protein SepF, found in Clostridium kluyveri (strain NBRC 12016).